The following is a 215-amino-acid chain: uncharacterized protein (215 aa).

This is an uncharacterized protein from Saccharomyces cerevisiae (strain ATCC 204508 / S288c) (Baker's yeast).